The chain runs to 238 residues: Probable transcriptional regulatory protein HH_1604 (238 aa).

It belongs to the TACO1 family.

The protein resides in the cytoplasm. This Helicobacter hepaticus (strain ATCC 51449 / 3B1) protein is Probable transcriptional regulatory protein HH_1604.